Here is a 161-residue protein sequence, read N- to C-terminus: Cysteine dioxygenase (161 aa).

Residues His-75, His-77, and His-125 each contribute to the Fe cation site.

It belongs to the cysteine dioxygenase family. Requires Fe cation as cofactor.

The enzyme catalyses L-cysteine + O2 = 3-sulfino-L-alanine + H(+). The protein is Cysteine dioxygenase (cdoA) of Bacillus subtilis (strain 168).